A 230-amino-acid chain; its full sequence is Inactive 2-(S)-hydroxypropyl-CoM dehydrogenase 2 (230 aa).

Belongs to the short-chain dehydrogenases/reductases (SDR) family.

The polypeptide is Inactive 2-(S)-hydroxypropyl-CoM dehydrogenase 2 (Xanthobacter autotrophicus (strain ATCC BAA-1158 / Py2)).